The chain runs to 240 residues: NDR1/HIN1-like protein 2 (240 aa).

The chain crosses the membrane as a helical span at residues 57–77 (NILIAVAVILGVAALILWLIF). 4 N-linked (GlcNAc...) asparagine glycosylation sites follow: Asn-109, Asn-141, Asn-151, and Asn-223.

Expressed at low levels in roots, rosette leaves, cauline leaves, stems, flowers and siliques.

The protein resides in the cell membrane. May play a role in plant immunity. This is NDR1/HIN1-like protein 2 from Arabidopsis thaliana (Mouse-ear cress).